Reading from the N-terminus, the 489-residue chain is N-succinylglutamate 5-semialdehyde dehydrogenase (489 aa).

An NAD(+)-binding site is contributed by Gly224–Gly229. Catalysis depends on residues Glu247 and Cys281.

Belongs to the aldehyde dehydrogenase family. AstD subfamily.

It catalyses the reaction N-succinyl-L-glutamate 5-semialdehyde + NAD(+) + H2O = N-succinyl-L-glutamate + NADH + 2 H(+). It participates in amino-acid degradation; L-arginine degradation via AST pathway; L-glutamate and succinate from L-arginine: step 4/5. Functionally, catalyzes the NAD-dependent reduction of succinylglutamate semialdehyde into succinylglutamate. This chain is N-succinylglutamate 5-semialdehyde dehydrogenase, found in Chromohalobacter salexigens (strain ATCC BAA-138 / DSM 3043 / CIP 106854 / NCIMB 13768 / 1H11).